Consider the following 103-residue polypeptide: Cell division protein FtsB (103 aa).

Residues 1 to 3 are Cytoplasmic-facing; that stretch reads MGK. Residues 4 to 21 traverse the membrane as a helical segment; it reads LTLLLLAILVWLQYSLWF. Residues 22–103 lie on the Periplasmic side of the membrane; the sequence is GKNGIHDYTR…RAQSAGQNNR (82 aa). The stretch at 31 to 71 forms a coiled coil; it reads RVNDDVAAQQATNAKLKARNDQLFAEIDDLNGGQEALEERA.

The protein belongs to the FtsB family. In terms of assembly, part of a complex composed of FtsB, FtsL and FtsQ.

It is found in the cell inner membrane. Its function is as follows. Essential cell division protein. May link together the upstream cell division proteins, which are predominantly cytoplasmic, with the downstream cell division proteins, which are predominantly periplasmic. The protein is Cell division protein FtsB of Shigella boydii serotype 18 (strain CDC 3083-94 / BS512).